A 208-amino-acid polypeptide reads, in one-letter code: Protein-L-isoaspartate O-methyltransferase (208 aa).

The active site involves S59.

Belongs to the methyltransferase superfamily. L-isoaspartyl/D-aspartyl protein methyltransferase family.

The protein localises to the cytoplasm. It carries out the reaction [protein]-L-isoaspartate + S-adenosyl-L-methionine = [protein]-L-isoaspartate alpha-methyl ester + S-adenosyl-L-homocysteine. Catalyzes the methyl esterification of L-isoaspartyl residues in peptides and proteins that result from spontaneous decomposition of normal L-aspartyl and L-asparaginyl residues. It plays a role in the repair and/or degradation of damaged proteins. This chain is Protein-L-isoaspartate O-methyltransferase, found in Pectobacterium atrosepticum (strain SCRI 1043 / ATCC BAA-672) (Erwinia carotovora subsp. atroseptica).